A 156-amino-acid polypeptide reads, in one-letter code: uncharacterized protein (156 aa).

It is found in the mitochondrion. This is an uncharacterized protein from Paramecium tetraurelia.